Reading from the N-terminus, the 341-residue chain is S-adenosylmethionine:tRNA ribosyltransferase-isomerase (341 aa).

It belongs to the QueA family. As to quaternary structure, monomer.

The protein resides in the cytoplasm. It catalyses the reaction 7-aminomethyl-7-carbaguanosine(34) in tRNA + S-adenosyl-L-methionine = epoxyqueuosine(34) in tRNA + adenine + L-methionine + 2 H(+). It participates in tRNA modification; tRNA-queuosine biosynthesis. Functionally, transfers and isomerizes the ribose moiety from AdoMet to the 7-aminomethyl group of 7-deazaguanine (preQ1-tRNA) to give epoxyqueuosine (oQ-tRNA). This Staphylococcus saprophyticus subsp. saprophyticus (strain ATCC 15305 / DSM 20229 / NCIMB 8711 / NCTC 7292 / S-41) protein is S-adenosylmethionine:tRNA ribosyltransferase-isomerase.